Here is a 274-residue protein sequence, read N- to C-terminus: 2,3,4,5-tetrahydropyridine-2,6-dicarboxylate N-succinyltransferase (274 aa).

Positions 104 and 141 each coordinate substrate.

This sequence belongs to the transferase hexapeptide repeat family. Homotrimer.

The protein resides in the cytoplasm. It catalyses the reaction (S)-2,3,4,5-tetrahydrodipicolinate + succinyl-CoA + H2O = (S)-2-succinylamino-6-oxoheptanedioate + CoA. Its pathway is amino-acid biosynthesis; L-lysine biosynthesis via DAP pathway; LL-2,6-diaminopimelate from (S)-tetrahydrodipicolinate (succinylase route): step 1/3. This is 2,3,4,5-tetrahydropyridine-2,6-dicarboxylate N-succinyltransferase from Yersinia pestis.